Reading from the N-terminus, the 240-residue chain is UDP-2,3-diacylglucosamine hydrolase (240 aa).

Mn(2+) is bound by residues D8, H10, D41, N79, and H114. Residue 79 to 80 (NR) participates in substrate binding. Residues D122, S160, N164, K167, and H195 each contribute to the substrate site. H195 and H197 together coordinate Mn(2+).

It belongs to the LpxH family. Mn(2+) is required as a cofactor.

The protein localises to the cell inner membrane. It catalyses the reaction UDP-2-N,3-O-bis[(3R)-3-hydroxytetradecanoyl]-alpha-D-glucosamine + H2O = 2-N,3-O-bis[(3R)-3-hydroxytetradecanoyl]-alpha-D-glucosaminyl 1-phosphate + UMP + 2 H(+). It functions in the pathway glycolipid biosynthesis; lipid IV(A) biosynthesis; lipid IV(A) from (3R)-3-hydroxytetradecanoyl-[acyl-carrier-protein] and UDP-N-acetyl-alpha-D-glucosamine: step 4/6. Hydrolyzes the pyrophosphate bond of UDP-2,3-diacylglucosamine to yield 2,3-diacylglucosamine 1-phosphate (lipid X) and UMP by catalyzing the attack of water at the alpha-P atom. Involved in the biosynthesis of lipid A, a phosphorylated glycolipid that anchors the lipopolysaccharide to the outer membrane of the cell. The protein is UDP-2,3-diacylglucosamine hydrolase of Shigella dysenteriae serotype 1 (strain Sd197).